The following is a 628-amino-acid chain: Beta-galactosidase large subunit (628 aa).

The Proton donor role is filled by Glu468. The Nucleophile role is filled by Glu536.

Belongs to the glycosyl hydrolase 2 family. As to quaternary structure, heterodimer of a large (LacL) and a small subunit (LacM).

The catalysed reaction is Hydrolysis of terminal non-reducing beta-D-galactose residues in beta-D-galactosides.. In terms of biological role, component of a beta-galactosidase. In Lactobacillus helveticus (Lactobacillus suntoryeus), this protein is Beta-galactosidase large subunit.